The primary structure comprises 950 residues: Protocadherin alpha-1 (950 aa).

The N-terminal stretch at 1–29 is a signal peptide; that stretch reads MVFSRRGGLGARDLLLWLLLLAAWEVGSG. 6 Cadherin domains span residues 30 to 133, 157 to 242, 243 to 350, 351 to 455, 456 to 565, and 588 to 678; these read QLHY…PPVF, AADA…APLF, DQAV…APEL, AVTS…APAF, AQPE…APAL, and GHVV…APKA. Residues 30-697 lie on the Extracellular side of the membrane; the sequence is QLHYSIPEEA…GPEAALVDVN (668 aa). Residues N257 and N265 are each glycosylated (N-linked (GlcNAc...) asparagine). N-linked (GlcNAc...) asparagine glycosylation is present at N548. A helical transmembrane segment spans residues 698-718; sequence VYLIIAICAVSSLLVLTLLLY. Residues 719–950 are Cytoplasmic-facing; that stretch reads TALRCSVPPT…GNSTTDNSDQ (232 aa). 5 PXXP repeats span residues 734–737, 799–802, 832–835, 873–876, and 891–894; these read PGKP, PRQP, PGGP, PGNP, and PGSP. A 5 X 4 AA repeats of P-X-X-P region spans residues 734 to 894; that stretch reads PGKPTLVCSS…PDKFIIPGSP (161 aa). Disordered stretches follow at residues 752–808, 828–856, and 871–890; these read QQRR…DWRY, LRAGPGGPDQQWPTVSSATPEPEAGEVSP, and YGPGNPKQSGPGELPDKFII. Residues 900–950 form a disordered region; it reads RQEPTNSQIDKSDFITFGKKEETKKKKKKKKGNKTQEKKEKGNSTTDNSDQ. Residues 909–923 show a composition bias toward basic and acidic residues; it reads DKSDFITFGKKEETK.

Its subcellular location is the cell membrane. The protein resides in the secreted. In terms of biological role, potential calcium-dependent cell-adhesion protein. May be involved in the establishment and maintenance of specific neuronal connections in the brain. This is Protocadherin alpha-1 (PCDHA1) from Homo sapiens (Human).